Consider the following 99-residue polypeptide: MSQERLLSVLRAPHISEKATNNAEKSNTVVLKVALDANKAEIAAAVAQLFEVKVDSVRTVVVKGKTKRRGNKMGRRSDWKKAYVTLAEGQNLDFVDSAE.

It belongs to the universal ribosomal protein uL23 family. As to quaternary structure, part of the 50S ribosomal subunit. Contacts protein L29, and trigger factor when it is bound to the ribosome.

In terms of biological role, one of the early assembly proteins it binds 23S rRNA. One of the proteins that surrounds the polypeptide exit tunnel on the outside of the ribosome. Forms the main docking site for trigger factor binding to the ribosome. The sequence is that of Large ribosomal subunit protein uL23 from Haemophilus influenzae (strain 86-028NP).